The sequence spans 404 residues: Trigger factor (404 aa).

The region spanning 160–225 (KDHLFVRTEE…VLEVKTLKLP (66 aa)) is the PPIase FKBP-type domain.

This sequence belongs to the FKBP-type PPIase family. Tig subfamily.

The protein localises to the cytoplasm. It carries out the reaction [protein]-peptidylproline (omega=180) = [protein]-peptidylproline (omega=0). Its function is as follows. Involved in protein export. Acts as a chaperone by maintaining the newly synthesized protein in an open conformation. Functions as a peptidyl-prolyl cis-trans isomerase. This Thermus thermophilus (strain ATCC BAA-163 / DSM 7039 / HB27) protein is Trigger factor.